A 368-amino-acid chain; its full sequence is Nucleotide pyrophosphatase/phosphodiesterase (368 aa).

Belongs to the metallophosphoesterase superfamily. As to quaternary structure, monomer and homomer. Post-translationally, glycosylated.

The protein localises to the plastid. It localises to the chloroplast. Functionally, hydrolyzes pyrophosphate, phosphodiester and phosphosulfate linkages of nucleotide-sugars, sulfonucleotides and nucleoside di and triphosphates. Highest activity observed with the substrates ADP-glucose and adenosine 5'-phosphosulfate. This chain is Nucleotide pyrophosphatase/phosphodiesterase, found in Hordeum vulgare (Barley).